Reading from the N-terminus, the 179-residue chain is Acireductone dioxygenase (179 aa).

Fe(2+) contacts are provided by His88, His90, Glu94, and His133. His88, His90, Glu94, and His133 together coordinate Ni(2+).

This sequence belongs to the acireductone dioxygenase (ARD) family. As to quaternary structure, monomer. Interacts with MMP14. Requires Fe(2+) as cofactor. Ni(2+) is required as a cofactor.

Its subcellular location is the cytoplasm. The protein localises to the nucleus. The protein resides in the cell membrane. It catalyses the reaction 1,2-dihydroxy-5-(methylsulfanyl)pent-1-en-3-one + O2 = 4-methylsulfanyl-2-oxobutanoate + formate + 2 H(+). It carries out the reaction 1,2-dihydroxy-5-(methylsulfanyl)pent-1-en-3-one + O2 = 3-(methylsulfanyl)propanoate + CO + formate + 2 H(+). It functions in the pathway amino-acid biosynthesis; L-methionine biosynthesis via salvage pathway; L-methionine from S-methyl-5-thio-alpha-D-ribose 1-phosphate: step 5/6. Functionally, catalyzes 2 different reactions between oxygen and the acireductone 1,2-dihydroxy-3-keto-5-methylthiopentene (DHK-MTPene) depending upon the metal bound in the active site. Fe-containing acireductone dioxygenase (Fe-ARD) produces formate and 2-keto-4-methylthiobutyrate (KMTB), the alpha-ketoacid precursor of methionine in the methionine recycle pathway. Ni-containing acireductone dioxygenase (Ni-ARD) produces methylthiopropionate, carbon monoxide and formate, and does not lie on the methionine recycle pathway. Also down-regulates cell migration mediated by MMP14. The protein is Acireductone dioxygenase of Macaca mulatta (Rhesus macaque).